The following is a 61-amino-acid chain: Alpha-conotoxine-like Am1.4 (61 aa).

Positions methionine 1–serine 21 are cleaved as a signal peptide. Residues phenylalanine 22–lysine 44 constitute a propeptide that is removed on maturation.

Belongs to the conotoxin A superfamily. In terms of processing, is not hydroxylated. Post-translationally, contains 2 disulfide bonds. In terms of tissue distribution, expressed by the venom duct.

It is found in the secreted. Alpha-conotoxins act on postsynaptic membranes, they bind to the nicotinic acetylcholine receptors (nAChR) and thus inhibit them. This is Alpha-conotoxine-like Am1.4 from Conus amadis (Amadis cone).